The chain runs to 100 residues: Urease subunit gamma (100 aa).

It belongs to the urease gamma subunit family. As to quaternary structure, heterotrimer of UreA (gamma), UreB (beta) and UreC (alpha) subunits. Three heterotrimers associate to form the active enzyme.

The protein localises to the cytoplasm. The catalysed reaction is urea + 2 H2O + H(+) = hydrogencarbonate + 2 NH4(+). The protein operates within nitrogen metabolism; urea degradation; CO(2) and NH(3) from urea (urease route): step 1/1. The chain is Urease subunit gamma from Cyanothece sp. (strain PCC 7425 / ATCC 29141).